Here is a 227-residue protein sequence, read N- to C-terminus: Ubiquitin domain-containing protein 1 (227 aa).

Basic and acidic residues predominate over residues 1–14 (MGGCVGRERAETRG). The tract at residues 1–45 (MGGCVGRERAETRGRGSRTQRKRGGRNEPLKKDKPKWKSDYPMTE) is disordered. The segment covering 15–24 (RGSRTQRKRG) has biased composition (basic residues). Positions 25–39 (GRNEPLKKDKPKWKS) are enriched in basic and acidic residues. A Ubiquitin-like domain is found at 150–225 (FQLKVRLSTG…IQVIVNQPAP (76 aa)).

May be involved in the regulation of cellular senescence through a positive feedback loop with TP53. The protein is Ubiquitin domain-containing protein 1 (ubtd1) of Danio rerio (Zebrafish).